Consider the following 205-residue polypeptide: Hydrogenase-4 component A (205 aa).

4 consecutive 4Fe-4S ferredoxin-type domains span residues 2–31 (NRFV…TQGL), 41–72 (KTST…SQRD), 73–102 (DAIQ…ASGS), and 140–172 (QTVA…LITG). Residues Cys12, Cys15, Cys18, Cys22, Cys51, Cys54, Cys59, Cys63, Cys82, Cys85, Cys88, Cys92, Cys146, Cys149, Cys158, and Cys162 each coordinate [4Fe-4S] cluster.

[4Fe-4S] cluster serves as cofactor.

In terms of biological role, probable electron transfer protein for hydrogenase 4. The sequence is that of Hydrogenase-4 component A from Escherichia coli (strain K12).